Reading from the N-terminus, the 288-residue chain is Shikimate dehydrogenase (NADP(+)) (288 aa).

Residues 22-24 and T69 each bind shikimate; that span reads SLS. K73 (proton acceptor) is an active-site residue. The shikimate site is built by N94 and D110. Residues 131–135 and L228 each bind NADP(+); that span reads GSGGA. Position 230 (Y230) interacts with shikimate. G251 contacts NADP(+).

It belongs to the shikimate dehydrogenase family. As to quaternary structure, homodimer.

It catalyses the reaction shikimate + NADP(+) = 3-dehydroshikimate + NADPH + H(+). The protein operates within metabolic intermediate biosynthesis; chorismate biosynthesis; chorismate from D-erythrose 4-phosphate and phosphoenolpyruvate: step 4/7. Involved in the biosynthesis of the chorismate, which leads to the biosynthesis of aromatic amino acids. Catalyzes the reversible NADPH linked reduction of 3-dehydroshikimate (DHSA) to yield shikimate (SA). The polypeptide is Shikimate dehydrogenase (NADP(+)) (Synechococcus sp. (strain JA-2-3B'a(2-13)) (Cyanobacteria bacterium Yellowstone B-Prime)).